Reading from the N-terminus, the 498-residue chain is Glycerol kinase (498 aa).

ADP is bound at residue Thr-12. Thr-12, Thr-13, and Ser-14 together coordinate ATP. Thr-12 is a sn-glycerol 3-phosphate binding site. Residue Arg-16 coordinates ADP. Residues Arg-82, Glu-83, Tyr-134, and Asp-243 each coordinate sn-glycerol 3-phosphate. Arg-82, Glu-83, Tyr-134, Asp-243, and Gln-244 together coordinate glycerol. ADP is bound by residues Thr-265 and Gly-308. Residues Thr-265, Gly-308, Gln-312, and Gly-409 each coordinate ATP. The ADP site is built by Gly-409 and Asn-413.

This sequence belongs to the FGGY kinase family. As to quaternary structure, homotetramer and homodimer (in equilibrium).

The enzyme catalyses glycerol + ATP = sn-glycerol 3-phosphate + ADP + H(+). Its pathway is polyol metabolism; glycerol degradation via glycerol kinase pathway; sn-glycerol 3-phosphate from glycerol: step 1/1. Its activity is regulated as follows. Activated by phosphorylation and inhibited by fructose 1,6-bisphosphate (FBP). Its function is as follows. Key enzyme in the regulation of glycerol uptake and metabolism. Catalyzes the phosphorylation of glycerol to yield sn-glycerol 3-phosphate. The polypeptide is Glycerol kinase (Clostridium botulinum (strain ATCC 19397 / Type A)).